The primary structure comprises 65 residues: Subtilisin inhibitor CLSI-I (65 aa).

The protein belongs to the protease inhibitor I13 (potato type I serine protease inhibitor) family.

Functionally, inhibits subtilisin-type microbial serine proteases including proteinase K, subtilisin BPN', subtilisin Carlsberg, subtilisin E, A.oryzae protease and S.griseus alkaline protease. Weakly inhibits pronase E. Does not inhibit trypsin or chymotrypsin. This is Subtilisin inhibitor CLSI-I from Canavalia lineata (Beach bean).